Consider the following 377-residue polypeptide: Carboxynorspermidine/carboxyspermidine decarboxylase (377 aa).

Position 41 is an N6-(pyridoxal phosphate)lysine (K41). E238 and D274 together coordinate substrate.

It belongs to the Orn/Lys/Arg decarboxylase class-II family. NspC subfamily. Homodimer. Pyridoxal 5'-phosphate is required as a cofactor.

The protein localises to the cytoplasm. It catalyses the reaction carboxynorspermidine + H(+) = norspermidine + CO2. The catalysed reaction is carboxyspermidine + H(+) = spermidine + CO2. With respect to regulation, dithiothreitol greatly stimulates activity, maximum stimulation being at 5-20 mM dithiothreitol concentration. Fe(3+), Fe(2+) and Mn(2+) severely inhibit activity (88%, 82% and 50%, respectively), whereas Zn(2+) has a slightly inhibitory effect (23%) and Mg(2+), Ca(2+), Cu(2+) and Cu(+) have no effect. Functionally, catalyzes the decarboxylation of carboxynorspermidine and carboxyspermidine. 2,3-diaminopropionic acid, 2,4-diaminobutyric acid, L-ornithine or L-lysine cannot serve as substrates. The protein is Carboxynorspermidine/carboxyspermidine decarboxylase of Vibrio alginolyticus.